The sequence spans 380 residues: Shaggy-related protein kinase eta (380 aa).

Residues 40 to 324 (YMAERVVGTG…ALEACAHPFF (285 aa)) form the Protein kinase domain. Residues 46–54 (VGTGSFGIV) and Lys69 each bind ATP. Thr104 is subject to Phosphothreonine. Ser105 carries the post-translational modification Phosphoserine. Residue Asp165 is the Proton acceptor of the active site. Ser187 carries the phosphoserine modification. Tyr200 is subject to Phosphotyrosine. 2 positions are modified to phosphothreonine: Thr220 and Thr261. Phosphoserine is present on Ser310. A Phosphothreonine modification is found at Thr314. A Phosphoserine modification is found at Ser353.

Belongs to the protein kinase superfamily. CMGC Ser/Thr protein kinase family. GSK-3 subfamily. In terms of assembly, interacts in vitro with the C-terminal fragment of BZR1 and with BES1/BZR2, but not through the kinase domain. Interacts with BHLH150, beet curly top virus AL4/C4 and tomato golden mosaic virus AL4/AC4. Interacts with YDA. Interacts with MKK4. Interacts with KIB1 and KIB2 in a brassinosteroid (BR)-dependent manner. Interacts with BSK1, BSK6, BSK8 and BSK11. Binds to WRKY46, WRKY54 and WRKY70. Component of a complex made of POLAR, BASL, ASK7/BIN2 and ASK3/SK12. Binds to POLAR and BASL. Autophosphorylated mainly on threonine and serine residues. Post-translationally, ubiquitination and subsequent proteasomal degradation mediated by KIB1. As to expression, in the two outer cell layers of the developing seed coat and restricted to the suspensor cells in developing embryos. Mostly expressed in stomatal lineage cells with asymmetric cell division (ACD) potential. Observed in small cells of non-protruding hypocotyl cell files and of developing cotyledon epidermis.

The protein localises to the cytoplasm. It localises to the cell cortex. The protein resides in the nucleus. It is found in the cell membrane. It catalyses the reaction L-seryl-[protein] + ATP = O-phospho-L-seryl-[protein] + ADP + H(+). The catalysed reaction is L-threonyl-[protein] + ATP = O-phospho-L-threonyl-[protein] + ADP + H(+). Inactivated by an unknown mechanism after binding of brassinosteroids to the brassinosteroid receptor complex. Inhibited by lithium. Inhibited by dephosphorylation at Tyr-200 by BSU1. Competitive inhibition by KIB1 that reduces substrate (e.g. BZR1) access. Repressed by bikinin. Functionally, negative regulator in brassinosteroid signal transduction pathway important for plant growth. May be also involved in auxin signaling pathway. Phosphorylates and increases the degradation of BZR1 and BZR2/BES1 by the proteasome. Phosphorylates BHLH150, beet curly top virus C4 and tomato golden mosaic virus AC4 on threonine and serine residues. Upon brassinosteroid signaling, inhibits stomatal development by phosphorylating and inhibiting the MAPKK kinase YDA and the MAPK kinases MKK4 and MKK5. Phosphorylates BSK1, BSK3, BSK5, BSK6, BSK8 and BSK11 in vitro. Phoyphorylates and destabilizes WRKY46, WRKY54 and WRKY70. Mediates BASL nuclear exclusion; kinase activity is required for this function. Required first at the cortical polarity site, to restrict MAPK signaling and promote asymmetric cell division (ACD), and second in the nucleus of stomatal lineage ground cells (SLGCs) or meristemoids, to limit cell division and to promote differentiation into pavement or stomatal guard cells, respectively, likely by initiating BASL polarization. Phosphorylates BASL, YDA and SPCH in vitro and POLAR in vivo. Phosphorylates and inhibits SPCH in the nucleus of SLGC undergoing ACD, thus negatively regulating stomatal development. This Arabidopsis thaliana (Mouse-ear cress) protein is Shaggy-related protein kinase eta.